A 396-amino-acid chain; its full sequence is MAKVLAINAGSSSLKFQLFEMPAETVLTKGVVERIGFDDAIFTIVVNGEKHQEVTAIPDHAAAVKMLLDKLIRYGIIRSFDEIDGIGHRVVHGGEKFSDSVLITEDVIKQIEEVSELAPLHNPANLVGIRAFQEVLPDVPAVAVFDTAFHQTMPEQSFLYSLPYEYYTKFGIRKYGFHGTSHKYVTQRAAELLGRPIEQLRLISCHLGNGASIAAVEGGKSIDTSMGFTPLAGVAMGTRSGNIDPALIPYIMEKTGMTADEVIEVLNKKSGMLGLSGISSDLRDLEKAAAEGNERAELALEVFANRIHKYIGSYAARMCGVDAIIFTAGIGENSEVVRAKVLRGLEFMGVYWDPILNKVRGKEAFISYPHSPVKVLVIPTNEELMIARDVMRLANL.

N8 contacts Mg(2+). K15 serves as a coordination point for ATP. R89 serves as a coordination point for substrate. Residue D146 is the Proton donor/acceptor of the active site. ATP-binding positions include 206–210 (HLGNG), 281–283 (DLR), and 329–333 (GIGEN). E382 serves as a coordination point for Mg(2+).

The protein belongs to the acetokinase family. Homodimer. Mg(2+) is required as a cofactor. It depends on Mn(2+) as a cofactor.

The protein resides in the cytoplasm. It carries out the reaction acetate + ATP = acetyl phosphate + ADP. The protein operates within metabolic intermediate biosynthesis; acetyl-CoA biosynthesis; acetyl-CoA from acetate: step 1/2. In terms of biological role, catalyzes the formation of acetyl phosphate from acetate and ATP. Can also catalyze the reverse reaction. The chain is Acetate kinase from Geobacillus kaustophilus (strain HTA426).